A 346-amino-acid chain; its full sequence is Methylthioribose-1-phosphate isomerase (346 aa).

Substrate is bound by residues 48–50 (RGA), Arg-91, and Gln-196. Catalysis depends on Asp-237, which acts as the Proton donor. 247 to 248 (NK) provides a ligand contact to substrate.

The protein belongs to the eIF-2B alpha/beta/delta subunits family. MtnA subfamily.

It carries out the reaction 5-(methylsulfanyl)-alpha-D-ribose 1-phosphate = 5-(methylsulfanyl)-D-ribulose 1-phosphate. Its pathway is amino-acid biosynthesis; L-methionine biosynthesis via salvage pathway; L-methionine from S-methyl-5-thio-alpha-D-ribose 1-phosphate: step 1/6. Its function is as follows. Catalyzes the interconversion of methylthioribose-1-phosphate (MTR-1-P) into methylthioribulose-1-phosphate (MTRu-1-P). The protein is Methylthioribose-1-phosphate isomerase of Thermosipho melanesiensis (strain DSM 12029 / CIP 104789 / BI429).